The sequence spans 747 residues: Pyrin (747 aa).

Residues 1-92 form the Pyrin domain; the sequence is MANTRVDHLL…AEELHKATGP (92 aa). A disordered region spans residues 89 to 181; the sequence is ATGPEHLTEE…GARSAAPLYR (93 aa). The span at 122–135 shows a compositional bias: acidic residues; it reads PGEDEAQQNDDESD. Cysteine 442, histidine 445, cysteine 465, and histidine 471 together coordinate Zn(2+). The B box-type zinc finger occupies 442-479; sequence CPRHMKQVQLLFCEDHREPICLICRLSQEHQGHRVRPI. Residues 479–508 are a coiled coil; sequence IEEAALQYKEQIRKQLERLREMRGYVEEHK. The interval 487-645 is required for homotrimerization and induction of pyroptosomes; the sequence is KEQIRKQLER…RFSEMLGSEM (159 aa). A disordered region spans residues 698–720; the sequence is EPQDYLHPSSAQDTPELHEIHSQ.

As to quaternary structure, homotrimer. Interacts (via the B box-type zinc finger) with PSTPIP1. Interacts (via the B30.2/SPRY domain) with several components of the inflammasome complex, including CASP1 p20 and p10 subunits, CASP5, PYCARD, NLRP1, NLRP2 and NLRP3, as well as with unprocessed IL1B; this interaction may lead to autophagic degradation of these proteins. Component of the AIM2 PANoptosome complex, a multiprotein complex that drives inflammatory cell death (PANoptosis). Interacts with NFKBIA and RELA. Interacts weakly with VASP and ACTR3. Interacts with active ULK1 (phosphorylated on 'Ser-317') and BECN1 simultaneously. Also interacts with ATG16L1 (via WD repeats), and with ATG8 family members, including GABARAP, GABARAPL1 and, to a lesser extent, GABARAPL2, MAP1LC3A/LC3A and MAP1LC3C/LC3C. Interacts with TRIM21. Interacts with YWHAB, YWHAE, YWHAG, YWHAH, YWHAQ and YWHAZ; the interaction is required for the down-regulation of pyrin pro-inflammatory activity. In terms of processing, degraded along with the delivery of its substrates to autolysosomal compartments (at protein level). As to expression, expressed in spleen and, to a lesser degree in the lung. Not expressed in thymus, testis, ovary, heart, brain, liver, kidney and muscle.

The protein resides in the cytoplasm. Its subcellular location is the cytoskeleton. The protein localises to the cell projection. It is found in the ruffle. It localises to the lamellipodium. The protein resides in the cytoplasmic vesicle. Its subcellular location is the autophagosome. The protein localises to the nucleus. Involved in the regulation of innate immunity and the inflammatory response in response to IFNG/IFN-gamma. Organizes autophagic machinery by serving as a platform for the assembly of ULK1, Beclin 1/BECN1, ATG16L1, and ATG8 family members and recognizes specific autophagy targets, thus coordinating target recognition with assembly of the autophagic apparatus and initiation of autophagy. Acts as an autophagy receptor for the degradation of several inflammasome components, including CASP1, NLRP1 and NLRP3, hence preventing excessive IL1B- and IL18-mediated inflammation. However, it can also have a positive effect in the inflammatory pathway, acting as an innate immune sensor that triggers PYCARD/ASC specks formation, caspase-1 activation, and IL1B and IL18 production. Together with AIM2, also acts as a mediator of pyroptosis, necroptosis and apoptosis (PANoptosis), an integral part of host defense against pathogens, in response to bacterial infection. It is required for PSTPIP1-induced PYCARD/ASC oligomerization and inflammasome formation. Recruits PSTPIP1 to inflammasomes, and is required for PSTPIP1 oligomerization. This Rattus norvegicus (Rat) protein is Pyrin.